A 274-amino-acid polypeptide reads, in one-letter code: Undecaprenyl-diphosphatase (274 aa).

Transmembrane regions (helical) follow at residues 44-64 (AKVF…LVYW), 85-105 (LNVV…GKMI), 109-129 (LFIP…ILWA), 185-205 (ATDF…AYSL), 214-234 (VADI…AWLC), and 247-267 (FIPF…TAWT).

Belongs to the UppP family.

It is found in the cell inner membrane. The catalysed reaction is di-trans,octa-cis-undecaprenyl diphosphate + H2O = di-trans,octa-cis-undecaprenyl phosphate + phosphate + H(+). Its function is as follows. Catalyzes the dephosphorylation of undecaprenyl diphosphate (UPP). Confers resistance to bacitracin. This Variovorax paradoxus (strain S110) protein is Undecaprenyl-diphosphatase.